A 61-amino-acid polypeptide reads, in one-letter code: Large ribosomal subunit protein bL32 (61 aa).

Residues 1–16 (MAVPKRKTSPSRRGMR) are compositionally biased toward basic residues. A disordered region spans residues 1 to 44 (MAVPKRKTSPSRRGMRRSADALKAPTYVEDKDSGELRRPHHIDL). Residues 28-44 (VEDKDSGELRRPHHIDL) are compositionally biased toward basic and acidic residues.

The protein belongs to the bacterial ribosomal protein bL32 family.

The polypeptide is Large ribosomal subunit protein bL32 (Methylobacterium nodulans (strain LMG 21967 / CNCM I-2342 / ORS 2060)).